The following is an 850-amino-acid chain: Ras GTPase-activating protein 2 (850 aa).

A compositionally biased stretch (low complexity) spans M1–P24. The interval M1–R32 is disordered. A2 bears the N-acetylalanine mark. C2 domains follow at residues A20–F138 and V149–Y289. The Ras-GAP domain maps to D372–I589. Residue S555 is modified to Phosphoserine. Residues V604–R706 form the PH domain. Residues N708 to G744 form a Btk-type zinc finger. Zn(2+)-binding residues include H716, C727, C728, and C738. Positions H825 to S850 are disordered.

It is found in the cytoplasm. The protein resides in the perinuclear region. Its function is as follows. Inhibitory regulator of the Ras-cyclic AMP pathway. Binds inositol tetrakisphosphate (IP4). This chain is Ras GTPase-activating protein 2 (RASA2), found in Homo sapiens (Human).